The primary structure comprises 223 residues: Lipoprotein signal peptidase (223 aa).

Positions 1-20 (MNSAKVNPSGHAPTPAPTAS) are disordered. Helical transmembrane passes span 32–52 (LFFG…EAIF), 65–85 (WIIE…VFGL), 91–111 (LVFA…LFFF), and 116–136 (SCWL…NLYD). Active-site residues include D156 and D175. Residues 173–193 (IADSLLVTGAIMLLVQSFFFP) form a helical membrane-spanning segment. Positions 196–223 (PHGEADGNELPGRRAPDEPTEGTKPAAS) are disordered.

Belongs to the peptidase A8 family.

The protein localises to the cell inner membrane. It carries out the reaction Release of signal peptides from bacterial membrane prolipoproteins. Hydrolyzes -Xaa-Yaa-Zaa-|-(S,diacylglyceryl)Cys-, in which Xaa is hydrophobic (preferably Leu), and Yaa (Ala or Ser) and Zaa (Gly or Ala) have small, neutral side chains.. Its pathway is protein modification; lipoprotein biosynthesis (signal peptide cleavage). This protein specifically catalyzes the removal of signal peptides from prolipoproteins. The polypeptide is Lipoprotein signal peptidase (Rhodopirellula baltica (strain DSM 10527 / NCIMB 13988 / SH1)).